Reading from the N-terminus, the 482-residue chain is Methylenetetrahydrofolate--tRNA-(uracil-5-)-methyltransferase TrmFO (482 aa).

11-16 (GAGLAG) is an FAD binding site.

It belongs to the MnmG family. TrmFO subfamily. It depends on FAD as a cofactor.

The protein resides in the cytoplasm. The enzyme catalyses uridine(54) in tRNA + (6R)-5,10-methylene-5,6,7,8-tetrahydrofolate + NADH + H(+) = 5-methyluridine(54) in tRNA + (6S)-5,6,7,8-tetrahydrofolate + NAD(+). The catalysed reaction is uridine(54) in tRNA + (6R)-5,10-methylene-5,6,7,8-tetrahydrofolate + NADPH + H(+) = 5-methyluridine(54) in tRNA + (6S)-5,6,7,8-tetrahydrofolate + NADP(+). Its function is as follows. Catalyzes the folate-dependent formation of 5-methyl-uridine at position 54 (M-5-U54) in all tRNAs. This chain is Methylenetetrahydrofolate--tRNA-(uracil-5-)-methyltransferase TrmFO, found in Nitratidesulfovibrio vulgaris (strain DP4) (Desulfovibrio vulgaris).